A 202-amino-acid chain; its full sequence is Small ribosomal subunit protein uS4c (202 aa).

Residues 90–150 (MRLDNVIFRL…NQRKSQAIIN (61 aa)) enclose the S4 RNA-binding domain.

Belongs to the universal ribosomal protein uS4 family. As to quaternary structure, part of the 30S ribosomal subunit. Contacts protein S5. The interaction surface between S4 and S5 is involved in control of translational fidelity.

The protein localises to the plastid. It localises to the chloroplast. One of the primary rRNA binding proteins, it binds directly to 16S rRNA where it nucleates assembly of the body of the 30S subunit. In terms of biological role, with S5 and S12 plays an important role in translational accuracy. The sequence is that of Small ribosomal subunit protein uS4c (rps4) from Canalohypopterygium tamariscinum (Moss).